The sequence spans 383 residues: Flagellum-associated coiled-coil domain-containing protein 1 (383 aa).

The interval 26–79 (PYPLPKHPTGKFKPVLPPPISKEHNSLLSQPGKSTVSPRDKVQSGNTESSKAPS) is disordered. Over residues 51 to 77 (SLLSQPGKSTVSPRDKVQSGNTESSKA) the composition is skewed to polar residues. Coiled coils occupy residues 125-220 (TDII…YLKS) and 276-359 (KKMN…FQTK). Residue Lys-354 is modified to N6-acetyllysine.

As to expression, isoform 1 is specific to germ cells of the testis and localizes to the principal piece of the sperm flagellum. Isoform 2 seems to be expressed mainly in somatic cells of the testis, and is not detected in mature spermatozoa (at protein level). Isoform 2 may also be expressed weakly in brain.

It localises to the cytoplasm. Its subcellular location is the cytoplasmic granule. It is found in the cell projection. The protein localises to the cilium. The protein resides in the flagellum. The polypeptide is Flagellum-associated coiled-coil domain-containing protein 1 (Mus musculus (Mouse)).